We begin with the raw amino-acid sequence, 827 residues long: Cadherin-17 (827 aa).

A signal peptide spans 1 to 25 (MVSAQLHFLCLLTLYLTCGYGEEGK). At 26–786 (FSGPLKPMTF…RQDGIPTVGM (761 aa)) the chain is on the extracellular side. Cadherin domains follow at residues 29–127 (PLKP…TFLQ), 128–243 (SKYE…APEP), 244–339 (VEIR…PPTC), 340–448 (LSPV…IPIF), 449–565 (ETSN…VPVF), 566–666 (PQRI…PPRL), and 667–776 (AKDY…RPAG). Asparagine 148, asparagine 249, asparagine 418, asparagine 545, asparagine 573, asparagine 586, and asparagine 721 each carry an N-linked (GlcNAc...) asparagine glycan. Residues 787–807 (AVGILLTTFLVIGIILAVVFI) form a helical membrane-spanning segment. The Cytoplasmic segment spans residues 808 to 827 (RMRKDKVENPQSPENKPLRS).

In terms of tissue distribution, highest expression is found in intestine with lower expression in spleen, bone marrow, lung and testis. No expression detected in liver, kidney, heart, brain or skeletal muscle. Expressed in precursor B-cells and myeloid cells.

It localises to the cell membrane. Its function is as follows. Cadherins are calcium-dependent cell adhesion proteins. They preferentially interact with themselves in a homophilic manner in connecting cells; cadherins may thus contribute to the sorting of heterogeneous cell types. LI-cadherin may have a role in the morphological organization of liver and intestine. This is Cadherin-17 (Cdh17) from Mus musculus (Mouse).